The following is a 492-amino-acid chain: Adenylyltransferase and sulfurtransferase uba4 (492 aa).

ATP is bound by residues G99, D120, 127 to 131 (SNLHR), K144, and 188 to 189 (DN). 2 residues coordinate Zn(2+): C237 and C240. Residue C254 is the Glycyl thioester intermediate; for adenylyltransferase activity of the active site. Zn(2+)-binding residues include C317 and C320. Positions 378–490 (GSKEPTIIDV…WREQIDPDWP (113 aa)) constitute a Rhodanese domain. C445 (cysteine persulfide intermediate; for sulfurtransferase activity) is an active-site residue.

It in the N-terminal section; belongs to the HesA/MoeB/ThiF family. UBA4 subfamily. The cofactor is Zn(2+).

It is found in the cytoplasm. The protein resides in the cytosol. The enzyme catalyses [molybdopterin-synthase sulfur-carrier protein]-C-terminal Gly-Gly + ATP + H(+) = [molybdopterin-synthase sulfur-carrier protein]-C-terminal Gly-Gly-AMP + diphosphate. It carries out the reaction [molybdopterin-synthase sulfur-carrier protein]-C-terminal Gly-Gly-AMP + S-sulfanyl-L-cysteinyl-[cysteine desulfurase] + AH2 = [molybdopterin-synthase sulfur-carrier protein]-C-terminal-Gly-aminoethanethioate + L-cysteinyl-[cysteine desulfurase] + A + AMP + 2 H(+). It functions in the pathway tRNA modification; 5-methoxycarbonylmethyl-2-thiouridine-tRNA biosynthesis. The protein operates within cofactor biosynthesis; molybdopterin biosynthesis. Its function is as follows. Plays a central role in 2-thiolation of mcm(5)S(2)U at tRNA wobble positions of cytosolic tRNA(Lys), tRNA(Glu) and tRNA(Gln). Also essential during biosynthesis of the molybdenum cofactor. Acts by mediating the C-terminal thiocarboxylation of sulfur carriers urm1 and mocs2a. Its N-terminus first activates urm1 and mocs2a as acyl-adenylates (-COAMP), then the persulfide sulfur on the catalytic cysteine is transferred to urm1 and mocs2a to form thiocarboxylation (-COSH) of their C-terminus. The reaction probably involves hydrogen sulfide that is generated from the persulfide intermediate and that acts as a nucleophile towards urm1 and mocs2a. Subsequently, a transient disulfide bond is formed. Does not use thiosulfate as sulfur donor; nfs1 probably acting as a sulfur donor for thiocarboxylation reactions. The protein is Adenylyltransferase and sulfurtransferase uba4 of Aspergillus clavatus (strain ATCC 1007 / CBS 513.65 / DSM 816 / NCTC 3887 / NRRL 1 / QM 1276 / 107).